Consider the following 692-residue polypeptide: Elongation factor G (692 aa).

Residues 8–283 (NRIRNIGIAA…AVIDYLPAPT (276 aa)) enclose the tr-type G domain. Residues 17 to 24 (AHIDAGKT), 81 to 85 (DTPGH), and 135 to 138 (NKMD) each bind GTP.

Belongs to the TRAFAC class translation factor GTPase superfamily. Classic translation factor GTPase family. EF-G/EF-2 subfamily.

It localises to the cytoplasm. Catalyzes the GTP-dependent ribosomal translocation step during translation elongation. During this step, the ribosome changes from the pre-translocational (PRE) to the post-translocational (POST) state as the newly formed A-site-bound peptidyl-tRNA and P-site-bound deacylated tRNA move to the P and E sites, respectively. Catalyzes the coordinated movement of the two tRNA molecules, the mRNA and conformational changes in the ribosome. The protein is Elongation factor G of Helicobacter pylori (strain P12).